We begin with the raw amino-acid sequence, 1757 residues long: Serine/threonine-protein kinase WNK3 (1757 aa).

The tract at residues 1 to 25 (MATDSGEPASTEDSEKPDGVSFENR) is disordered. Ser-62 carries the post-translational modification Phosphoserine. Positions 66–82 (TEDDKVAESSRRDERKA) are enriched in basic and acidic residues. The segment at 66-85 (TEDDKVAESSRRDERKAATN) is disordered. Positions 146–404 (LKFDIELGRG…IKDLLNHAFF (259 aa)) constitute a Protein kinase domain. ATP is bound by residues 226 to 229 (TELM) and Lys-276. Catalysis depends on Asp-293, which acts as the Proton acceptor. Residues Ser-303 and Ser-307 each carry the phosphoserine; by autocatalysis modification. Positions 536–546 (EYEETEVDQHV) are interaction with KLHL3. Thr-540 is modified (phosphothreonine). 3 stretches are compositionally biased toward polar residues: residues 551 to 570 (LQGKPQQQSSSVRGDTSSEP), 578 to 604 (SDTSSHPTVAYSSNQTTSSQEQPKLTQ), and 674 to 689 (SVKENTNNPDTPSGNG). Disordered stretches follow at residues 551 to 604 (LQGK…KLTQ) and 674 to 705 (SVKENTNNPDTPSGNGKQDRNKQRRASCPRPE). Ser-1039 bears the Phosphoserine mark. Polar residues predominate over residues 1404-1422 (VATEKNVTSTTEVSVQSGS). 3 disordered regions span residues 1404–1440 (VATEKNVTSTTEVSVQSGSEPLDKEKNESTPGKQTCT), 1479–1498 (SLFYSPSSPMSSDNESEIED), and 1536–1574 (ATKDNKAQSSEVPLSPASPRRPRSFKSKLRSRPQSMTHS). A compositionally biased stretch (low complexity) spans 1479–1491 (SLFYSPSSPMSSD). Phosphoserine occurs at positions 1550 and 1553. Basic residues predominate over residues 1555 to 1566 (RRPRSFKSKLRS). Phosphoserine is present on Ser-1595. 2 disordered regions span residues 1621–1650 (HFPSKPSLNQLKQSQQKSEAENWNKSCEST) and 1734–1757 (PGMNLQSFPAPPVQNPASIPPGPK). The span at 1624 to 1637 (SKPSLNQLKQSQQK) shows a compositional bias: low complexity. Positions 1641 to 1650 (ENWNKSCEST) are enriched in polar residues. The segment covering 1742-1757 (PAPPVQNPASIPPGPK) has biased composition (pro residues).

It belongs to the protein kinase superfamily. Ser/Thr protein kinase family. WNK subfamily. Interacts with WNK1 and WNK4. Mg(2+) is required as a cofactor. Post-translationally, autophosphorylated at Ser-303 and Ser-307, promoting its activity. Phosphorylation at Thr-540 prevents interaction with KLHL3 and subsequent ubiquitination and degradation by the BCR(KLHL3) complex. Ubiquitinated by the BCR(KLHL2) complex, leading to its degradation. Ubiquitinated by the BCR(KLHL3) complex, leading to its degradation. In terms of tissue distribution, expressed in pancreatic duct.

It is found in the cytoplasm. The catalysed reaction is L-seryl-[protein] + ATP = O-phospho-L-seryl-[protein] + ADP + H(+). It catalyses the reaction L-threonyl-[protein] + ATP = O-phospho-L-threonyl-[protein] + ADP + H(+). Activated in response to hyperosmotic stress: cell shrinkage promotes formation of a membraneless compartment that concentrates WNK3 with its substrates, OXSR1/OSR1 and STK39/SPAK. Activation requires autophosphorylation of Ser-307 and, to a lower extent, Ser-303. Autophosphorylation and subsequent activation is inhibited by increases in intracellular ionic strength: Cl(-) potently inhibits WNK3 kinase activity via direct binding. Also inhibited by K(+) ions. Kinase activity is inhibited by WNK4. In terms of biological role, serine/threonine-protein kinase component of the WNK3-SPAK/OSR1 kinase cascade, which plays an important role in the regulation of electrolyte homeostasis and regulatory volume increase in response to hyperosmotic stress. WNK3 mediates regulatory volume increase in response to hyperosmotic stress by acting as a molecular crowding sensor, which senses cell shrinkage and mediates formation of a membraneless compartment by undergoing liquid-liquid phase separation. The membraneless compartment concentrates WNK3 with its substrates, OXSR1/OSR1 and STK39/SPAK, promoting WNK3-dependent phosphorylation and activation of downstream kinases OXSR1/OSR1 and STK39/SPAK. Following activation, OXSR1/OSR1 and STK39/SPAK catalyze phosphorylation of ion cotransporters SLC12A1/NKCC2, SLC12A2/NKCC1, SLC12A3/NCC, SLC12A4/KCC1, SLC12A5/KCC2 or SLC12A6/KCC3, regulating their activity. Phosphorylation of Na-K-Cl cotransporters SLC12A2/NKCC1 and SLC12A2/NKCC1 promote their activation and ion influx; simultaneously, phosphorylation of K-Cl cotransporters SLC12A4/KCC1, SLC12A5/KCC2 and SLC12A6/KCC3 inhibits its activity, blocking ion efflux. Phosphorylates WNK4, possibly regulating the activity of SLC12A3/NCC. May also phosphorylate NEDD4L. Also acts as a scaffold protein independently of its protein kinase activity: negatively regulates cell membrane localization of various transporters and channels, such as KCNJ1 and SLC26A9. Increases Ca(2+) influx mediated by TRPV5 and TRPV6 by enhancing their membrane expression level via a kinase-dependent pathway. The protein is Serine/threonine-protein kinase WNK3 of Mus musculus (Mouse).